A 145-amino-acid chain; its full sequence is MSLAEFDADVVINAQNCIVGRVASEVAQRALGGETVAIVNVEDAVITGSEEDVMSVYETRSELGSDQGPAYPSRPDGIFKRAVRGMLPYKSDRGREALSNVRTYVGNPYDDDGEAIDGTTLDRLSNIKFLSLGEVSANLGATVTW.

The protein belongs to the universal ribosomal protein uL13 family. As to quaternary structure, part of the 50S ribosomal subunit.

Functionally, this protein is one of the early assembly proteins of the 50S ribosomal subunit, although it is not seen to bind rRNA by itself. It is important during the early stages of 50S assembly. The polypeptide is Large ribosomal subunit protein uL13 (Haloquadratum walsbyi (strain DSM 16790 / HBSQ001)).